The chain runs to 258 residues: Type III pantothenate kinase (258 aa).

6–13 serves as a coordination point for ATP; the sequence is DVGNTNTV. Residues Tyr100 and 107–110 contribute to the substrate site; that span reads GADR. Asp109 (proton acceptor) is an active-site residue. Position 129 (Asp129) interacts with K(+). Thr132 contacts ATP. Residue Thr184 participates in substrate binding.

Belongs to the type III pantothenate kinase family. As to quaternary structure, homodimer. NH4(+) serves as cofactor. It depends on K(+) as a cofactor.

It localises to the cytoplasm. The enzyme catalyses (R)-pantothenate + ATP = (R)-4'-phosphopantothenate + ADP + H(+). It functions in the pathway cofactor biosynthesis; coenzyme A biosynthesis; CoA from (R)-pantothenate: step 1/5. Its activity is regulated as follows. Not regulated by feedback inhibition by CoA and its thioesters as described for many other pantothenate kinases. Not inhibited by N-pentylpantothenamide (N5-Pan), and this compound cannot act as a substrate either. Catalyzes the phosphorylation of pantothenate (Pan), the first step in CoA biosynthesis. Cannot utilize a phosphoryl donor other than ATP. The chain is Type III pantothenate kinase (coaX) from Bacillus subtilis (strain 168).